A 1014-amino-acid polypeptide reads, in one-letter code: Latrophilin-like protein 1 (1014 aa).

The N-terminal stretch at 1–27 (MRRNKTTYSLLQTILVACLLTVTPTFA) is a signal peptide. The N-linked (GlcNAc...) asparagine glycan is linked to Asn-4. Over 28–555 (SNKPTTDESG…IDQTLLTLLT (528 aa)) the chain is Extracellular. The SUEL-type lectin domain occupies 43–134 (ICDGEAAELS…KYLEVKYNCV (92 aa)). The GAIN-B domain maps to 359-542 (ESNVIVQPAI…AVLMDVRGHD (184 aa)). N-linked (GlcNAc...) asparagine glycans are attached at residues Asn-473 and Asn-518. Cystine bridges form between Cys-497/Cys-524 and Cys-512/Cys-526. The tract at residues 497-542 (CVWWNHHELKWKPSGCKLSYHNKTMTSCDCTHLTHFAVLMDVRGHD) is GPS. A helical transmembrane segment spans residues 556–576 (YVGCIISIICLLLTFFAYLIF). The Cytoplasmic portion of the chain corresponds to 577 to 584 (SRNGGDRV). A helical transmembrane segment spans residues 585–605 (FIHENLCLSLAIAEITFLAGI). At 606-613 (TRTEDSLQ) the chain is on the extracellular side. The chain crosses the membrane as a helical span at residues 614 to 634 (CGIIAVALMYMFLSALTWMLL). Over 635–653 (EGYHIHRMLTEVFPSDPRR) the chain is Cytoplasmic. A helical transmembrane segment spans residues 654–674 (FTYLLVGYIPPAIITLVAYLY). The Extracellular segment spans residues 675-692 (NSDGFGTPDHCWLSTQNN). A helical membrane pass occupies residues 693 to 713 (FIWFFAGPACFIFCANSLVLV). Over 714–745 (KTLCTVYQHTSGGYLPCRHDVDSGRSIRNWVK) the chain is Cytoplasmic. The helical transmembrane segment at 746 to 766 (GSLALASLLGVTWIFGLFWVE) threads the bilayer. The Extracellular segment spans residues 767–770 (DSRS). Residues 771 to 791 (IVMAYVFTISNSLQGLFIFLF) traverse the membrane as a helical segment. Topologically, residues 792–1014 (HVVFAEKMRK…NKPSMYCQDL (223 aa)) are cytoplasmic. 2 disordered regions span residues 814–833 (GSSN…DLMS) and 932–994 (YQGW…EVTP). Residues 941 to 952 (PEFSPPPPPLST) are compositionally biased toward pro residues. A compositionally biased stretch (low complexity) spans 965-986 (SGRRPPSSKMSDDSAYSDGSSS).

This sequence belongs to the G-protein coupled receptor 2 family. LN-TM7 subfamily. As to quaternary structure, monomer and homodimer. Post-translationally, autoproteolytically processed at the GPS region of the GAIN-B domain; this cleavage modulates receptor activity. As to expression, expressed in epidermal precursor cells and pharyngeal primordium. In adults expression is seen in pharyngeal muscle cells and nervous system, the nerve ring, the gonad, and the vulva.

It is found in the cell membrane. Has a role in the establishment of anterior-posterior polarity in tissues during embryogenesis. Required for the alignment of the mitotic spindles and division planes. May have a role in cell death events. Required for normal defection and oocyte fertilization. Involved in sperm function. Operates in pharyngeal pumping during feeding. This Caenorhabditis elegans protein is Latrophilin-like protein 1.